The sequence spans 511 residues: Sorting nexin MVP1 (511 aa).

The interval 1-36 is disordered; sequence MDNYEGSDPWNTSSNAWTKDDDHVVSTTNSEPSLNG. Residues 25 to 36 are compositionally biased toward polar residues; it reads VSTTNSEPSLNG. Residues 128–247 form the PX domain; it reads DADIIIIEEI…TFLTVRTDLT (120 aa). The a 1,2-diacyl-sn-glycero-3-phospho-(1D-myo-inositol-3-phosphate) site is built by arginine 172, serine 174, lysine 198, and arginine 213.

This sequence belongs to the sorting nexin family. Homodimer. Forms an autoinhibited tetramer consisting of 2 homodimers that self-interact, wherein the membrane-interacting BAR surfaces are sequestered and the PX lipid-binding sites are occluded. Interacts with VPS1.

It localises to the cytoplasm. Its subcellular location is the endosome membrane. Required for vacuolar protein sorting. Component of the retromer-mediated endosome-to-Golgi retrograde pathway. Required for efficient cargo export from the endosome, promoting VPS1-mediated fission of retromer-coated tubules that bud from the endosome. In Saccharomyces cerevisiae (strain ATCC 204508 / S288c) (Baker's yeast), this protein is Sorting nexin MVP1 (MVP1).